The chain runs to 462 residues: Tryptophan dimethylallyltransferase ifgA (462 aa).

L-tryptophan contacts are provided by residues 83–84 (IL) and Glu-92. Substrate contacts are provided by Arg-103, Lys-189, and Tyr-191. Positions 193 and 246 each coordinate L-tryptophan. Positions 259, 261, 263, 345, and 347 each coordinate substrate.

It belongs to the tryptophan dimethylallyltransferase family. As to quaternary structure, homodimer.

The enzyme catalyses L-tryptophan + dimethylallyl diphosphate = 4-(3-methylbut-2-enyl)-L-tryptophan + diphosphate. It functions in the pathway alkaloid biosynthesis; ergot alkaloid biosynthesis. Tryptophan dimethylallyltransferase; part of the gene cluster that mediates the biosynthesis of isofumigaclavines, fungal ergot alkaloids. The tryptophan dimethylallyltransferase ifgA catalyzes the first step of ergot alkaloid biosynthesis by condensing dimethylallyl diphosphate (DMAP) and tryptophan to form 4-dimethylallyl-L-tryptophan. The second step is catalyzed by the methyltransferase ifgB that methylates 4-dimethylallyl-L-tryptophan in the presence of S-adenosyl-L-methionine, resulting in the formation of N-methyl-dimethylallyl-L-tryptophan. The catalase ifgD and the FAD-dependent oxidoreductase ifgC then transform N-methyl-dimethylallyl-L-tryptophan to chanoclavine-I which is further oxidized by ifgE in the presence of NAD(+), resulting in the formation of chanoclavine-I aldehyde. The chanoclavine-I aldehyde reductases ifgG and/or fgaOx3 reduce chanoclavine-I aldehyde to dihydrochanoclavine-I aldehyde that spontaneously dehydrates to form 6,8-dimethyl-6,7-didehydroergoline. The festuclavine dehydrogenases ifgF1 and/or ifgF2 then catalyze the reduction of 6,8-dimethyl-6,7-didehydroergoline to form festuclavine. Hydrolysis of festuclavine by a yet undetermined cytochrome P450 monooxygenase (called ifgH) then leads to the formation of isofumigaclavine B which is in turn acetylated by ifgI to isofumigaclavine A. Penicillium roqueforti has interestingly at least two sets of genes for the consumption of chanoclavine-I aldehyde on three different loci, the OYEs ifgG/fgaOx3 and the festuclavine synthase homologs ifgF1/ifgF2. The reason for the duplication of these genes is unclear, probably to ensure the conversion of chanoclavine-I aldehyde by differential gene expression under various environmental conditions. This Penicillium roqueforti (strain FM164) protein is Tryptophan dimethylallyltransferase ifgA.